A 477-amino-acid polypeptide reads, in one-letter code: UDP-N-acetylmuramate--L-alanine ligase (477 aa).

112–118 is a binding site for ATP; the sequence is GTHGKTT.

Belongs to the MurCDEF family.

Its subcellular location is the cytoplasm. The catalysed reaction is UDP-N-acetyl-alpha-D-muramate + L-alanine + ATP = UDP-N-acetyl-alpha-D-muramoyl-L-alanine + ADP + phosphate + H(+). The protein operates within cell wall biogenesis; peptidoglycan biosynthesis. In terms of biological role, cell wall formation. In Verminephrobacter eiseniae (strain EF01-2), this protein is UDP-N-acetylmuramate--L-alanine ligase.